The sequence spans 186 residues: Nuclear transcription factor Y subunit C-5 (186 aa).

Positions 166–186 (QMPGAWTEEDATGANGGNGGN) are disordered.

The protein belongs to the NFYC/HAP5 subunit family. As to quaternary structure, heterotrimeric transcription factor composed of three components, NF-YA, NF-YB and NF-YC. NF-YB and NF-YC must interact and dimerize for NF-YA association and DNA binding. In terms of tissue distribution, expressed in inflorescences and flowers.

It is found in the nucleus. In terms of biological role, stimulates the transcription of various genes by recognizing and binding to a CCAAT motif in promoters. The polypeptide is Nuclear transcription factor Y subunit C-5 (NFYC5) (Arabidopsis thaliana (Mouse-ear cress)).